Consider the following 458-residue polypeptide: Secretion-regulating guanine nucleotide exchange factor (458 aa).

RCC1 repeat units follow at residues 15-67 (AALF…VTDG), 68-119 (GDLF…LTEN), 120-171 (GQVL…ATAS), 172-230 (GIVF…LTDA), 231-283 (GEVY…QTET), 284-351 (GKMF…IIGG), and 352-402 (VCYS…LCQL). Positions 420-458 (DAIEDTESQKAMDKERNWKERQSETSTQSQSDWSRNGGL) are disordered. Residues 426–442 (ESQKAMDKERNWKERQS) show a composition bias toward basic and acidic residues. Residue S427 is modified to Phosphoserine.

As to quaternary structure, interacts with SEC5. The interaction occurs only in the presence of magnesium or manganese and is stimulated by dCTP or GTP.

It is found in the cytoplasm. The protein localises to the nucleus. Functionally, probable guanine nucleotide exchange factor (GEF), which may be involved in the secretion process. The chain is Secretion-regulating guanine nucleotide exchange factor (SERGEF) from Homo sapiens (Human).